Consider the following 452-residue polypeptide: L-seryl-tRNA(Sec) selenium transferase (452 aa).

K285 carries the N6-(pyridoxal phosphate)lysine modification.

It belongs to the SelA family. It depends on pyridoxal 5'-phosphate as a cofactor.

It localises to the cytoplasm. The catalysed reaction is L-seryl-tRNA(Sec) + selenophosphate + H(+) = L-selenocysteinyl-tRNA(Sec) + phosphate. Its pathway is aminoacyl-tRNA biosynthesis; selenocysteinyl-tRNA(Sec) biosynthesis; selenocysteinyl-tRNA(Sec) from L-seryl-tRNA(Sec) (bacterial route): step 1/1. Functionally, converts seryl-tRNA(Sec) to selenocysteinyl-tRNA(Sec) required for selenoprotein biosynthesis. The sequence is that of L-seryl-tRNA(Sec) selenium transferase from Aquifex aeolicus (strain VF5).